We begin with the raw amino-acid sequence, 202 residues long: MIAYVEGRLAEVAGNACVVVTDGGVGYEVFVPGHTLARLPDKGGRVSFFISTEVREDALELYGFATWDERQTFIVLTSISKVGAKTGLAILSQFRPDDLRRLVVEDDVLALTRVSGIGKKTAQHIFLELKYKLKVEDLPAAAPLVTGGAPGGVFRDALAGLANLGYGEEEASHVLKDVLHGEPDLDVGGALRAALRALARGR.

Residues 1–65 (MIAYVEGRLA…EDALELYGFA (65 aa)) form a domain I region. The interval 66–144 (TWDERQTFIV…VEDLPAAAPL (79 aa)) is domain II. A flexible linker region spans residues 145 to 155 (VTGGAPGGVFR). Positions 155 to 202 (RDALAGLANLGYGEEEASHVLKDVLHGEPDLDVGGALRAALRALARGR) are domain III.

It belongs to the RuvA family. Homotetramer. Forms an RuvA(8)-RuvB(12)-Holliday junction (HJ) complex. HJ DNA is sandwiched between 2 RuvA tetramers; dsDNA enters through RuvA and exits via RuvB. An RuvB hexamer assembles on each DNA strand where it exits the tetramer. Each RuvB hexamer is contacted by two RuvA subunits (via domain III) on 2 adjacent RuvB subunits; this complex drives branch migration. In the full resolvosome a probable DNA-RuvA(4)-RuvB(12)-RuvC(2) complex forms which resolves the HJ.

Its subcellular location is the cytoplasm. Functionally, the RuvA-RuvB-RuvC complex processes Holliday junction (HJ) DNA during genetic recombination and DNA repair, while the RuvA-RuvB complex plays an important role in the rescue of blocked DNA replication forks via replication fork reversal (RFR). RuvA specifically binds to HJ cruciform DNA, conferring on it an open structure. The RuvB hexamer acts as an ATP-dependent pump, pulling dsDNA into and through the RuvAB complex. HJ branch migration allows RuvC to scan DNA until it finds its consensus sequence, where it cleaves and resolves the cruciform DNA. In Nitratidesulfovibrio vulgaris (strain ATCC 29579 / DSM 644 / CCUG 34227 / NCIMB 8303 / VKM B-1760 / Hildenborough) (Desulfovibrio vulgaris), this protein is Holliday junction branch migration complex subunit RuvA.